The following is a 76-amino-acid chain: MARFFRRRKFCRFTAEDVKEIDFKDLNTLKAYISETGKIVPSRITGTKARYQRQLATAIKRARFLALLPYTDSHGR.

This sequence belongs to the bacterial ribosomal protein bS18 family. In terms of assembly, part of the 30S ribosomal subunit. Forms a tight heterodimer with protein bS6.

Binds as a heterodimer with protein bS6 to the central domain of the 16S rRNA, where it helps stabilize the platform of the 30S subunit. This Ectopseudomonas mendocina (strain ymp) (Pseudomonas mendocina) protein is Small ribosomal subunit protein bS18.